The primary structure comprises 261 residues: UPF0246 protein Vapar_1301 (261 aa).

Belongs to the UPF0246 family.

This Variovorax paradoxus (strain S110) protein is UPF0246 protein Vapar_1301.